The chain runs to 421 residues: Phosphatidylinositol 5-phosphate 4-kinase type-2 gamma (421 aa).

A2 carries the N-acetylalanine modification. A Phosphoserine modification is found at S26. In terms of domain architecture, PIPK spans 43 to 420; sequence AADPLVGVFL…RFLDFITNIF (378 aa). A required for interaction with PIP5K1A region spans residues 69–75; it reads VMLLPDD. Residue S349 is modified to Phosphoserine.

As to quaternary structure, interacts with PIP5K1A; the interaction inhibits PIP5K1A kinase activity. Post-translationally, phosphorylated, phosphorylation is induced by EGF.

The protein localises to the endoplasmic reticulum. Its subcellular location is the cytoplasm. It catalyses the reaction a 1,2-diacyl-sn-glycero-3-phospho-(1D-myo-inositol-5-phosphate) + ATP = a 1,2-diacyl-sn-glycero-3-phospho-(1D-myo-inositol-4,5-bisphosphate) + ADP + H(+). It carries out the reaction 1,2-dihexadecanoyl-sn-glycero-3-phospho-(1D-myo-inositol-5-phosphate) + ATP = 1,2-dihexadecanoyl-sn-glycero-3-phospho-(1D-myo-inositol-4,5-bisphosphate) + ADP + H(+). The catalysed reaction is 1,2-dihexadecanoyl-sn-glycero-3-phospho-(1D-myo-inositol-5-phosphate) + GTP = 1,2-dihexadecanoyl-sn-glycero-3-phospho-(1D-myo-inositol-4,5-bisphosphate) + GDP + H(+). Its function is as follows. Phosphatidylinositol 5-phosphate 4-kinase with low enzymatic activity. May be a GTP sensor, has higher GTP-dependent kinase activity than ATP-dependent kinase activity. PIP4Ks negatively regulate insulin signaling through a catalytic-independent mechanism. They interact with PIP5Ks and suppress PIP5K-mediated PtdIns(4,5)P2 synthesis and insulin-dependent conversion to PtdIns(3,4,5)P3. The chain is Phosphatidylinositol 5-phosphate 4-kinase type-2 gamma from Homo sapiens (Human).